The chain runs to 392 residues: Methylthioribose-1-phosphate isomerase (392 aa).

D253 acts as the Proton donor in catalysis.

The protein belongs to the eIF-2B alpha/beta/delta subunits family. MtnA subfamily.

It is found in the cytoplasm. Its subcellular location is the nucleus. The catalysed reaction is 5-(methylsulfanyl)-alpha-D-ribose 1-phosphate = 5-(methylsulfanyl)-D-ribulose 1-phosphate. The protein operates within amino-acid biosynthesis; L-methionine biosynthesis via salvage pathway; L-methionine from S-methyl-5-thio-alpha-D-ribose 1-phosphate: step 1/6. Functionally, catalyzes the interconversion of methylthioribose-1-phosphate (MTR-1-P) into methylthioribulose-1-phosphate (MTRu-1-P). The protein is Methylthioribose-1-phosphate isomerase (mri1) of Pyrenophora tritici-repentis (strain Pt-1C-BFP) (Wheat tan spot fungus).